A 400-amino-acid polypeptide reads, in one-letter code: Phosphoglycerate kinase (400 aa).

Residues 22–24, Arg38, 61–64, Arg119, and Arg152 each bind substrate; these read DFN and HLGR. Residues Lys205, Gly296, Glu327, and 353–356 contribute to the ATP site; that span reads GGDT.

Belongs to the phosphoglycerate kinase family. Monomer.

It localises to the cytoplasm. It carries out the reaction (2R)-3-phosphoglycerate + ATP = (2R)-3-phospho-glyceroyl phosphate + ADP. Its pathway is carbohydrate degradation; glycolysis; pyruvate from D-glyceraldehyde 3-phosphate: step 2/5. This Campylobacter jejuni subsp. jejuni serotype O:6 (strain 81116 / NCTC 11828) protein is Phosphoglycerate kinase.